Consider the following 577-residue polypeptide: Proline--tRNA ligase (577 aa).

The protein belongs to the class-II aminoacyl-tRNA synthetase family. ProS type 1 subfamily. Homodimer.

Its subcellular location is the cytoplasm. It catalyses the reaction tRNA(Pro) + L-proline + ATP = L-prolyl-tRNA(Pro) + AMP + diphosphate. Functionally, catalyzes the attachment of proline to tRNA(Pro) in a two-step reaction: proline is first activated by ATP to form Pro-AMP and then transferred to the acceptor end of tRNA(Pro). As ProRS can inadvertently accommodate and process non-cognate amino acids such as alanine and cysteine, to avoid such errors it has two additional distinct editing activities against alanine. One activity is designated as 'pretransfer' editing and involves the tRNA(Pro)-independent hydrolysis of activated Ala-AMP. The other activity is designated 'posttransfer' editing and involves deacylation of mischarged Ala-tRNA(Pro). The misacylated Cys-tRNA(Pro) is not edited by ProRS. The polypeptide is Proline--tRNA ligase (Limosilactobacillus reuteri (strain DSM 20016) (Lactobacillus reuteri)).